The sequence spans 559 residues: Excitatory amino acid transporter 5 (559 aa).

The Cytoplasmic portion of the chain corresponds to 1 to 16 (MVLDAVLARGRTVCKH). The next 3 membrane-spanning stretches (helical) occupy residues 17–37 (NGLLILSVLSVIVGCLLGFFL), 60–80 (MLKMLILPLVVSSLMSGLASL), and 94–114 (AYYLWTTFLAVVVGIIMVSII). The Extracellular portion of the chain corresponds to 115-215 (HPGGAAQKET…EIVYKSEPGT (101 aa)). Residue N190 is glycosylated (N-linked (GlcNAc...) asparagine). The chain crosses the membrane as a helical span at residues 216 to 236 (SDGMNVLGIVIFSATMGIMLG). N253 carries N-linked (GlcNAc...) asparagine glycosylation. The next 6 membrane-spanning stretches (helical) occupy residues 259 to 279 (IVAVAGWYFPFGIVFLIAGKI), 298 to 318 (TVVCGLVVHGLLILPLLYFLI), 329 to 349 (GVLQALLIALATSSSSATLPI), 371 to 391 (VGATINMDGTALYEAVAAIFI), 413 to 433 (AASIGAAGIPQAGLVTMVIVL), and 456 to 476 (FRTMINVLGDALAAGIMAHIC).

This sequence belongs to the dicarboxylate/amino acid:cation symporter (DAACS) (TC 2.A.23) family. SLC1A7 subfamily. Interacts with the PDZ domains of DLG4. As to expression, expressed in retina, located in both cone and rod photoreceptor terminals and in axon terminals of rod bipolar cells.

It localises to the photoreceptor inner segment membrane. Its subcellular location is the synaptic cell membrane. The catalysed reaction is K(+)(in) + L-glutamate(out) + 3 Na(+)(out) + H(+)(out) = K(+)(out) + L-glutamate(in) + 3 Na(+)(in) + H(+)(in). It carries out the reaction K(+)(in) + L-aspartate(out) + 3 Na(+)(out) + H(+)(out) = K(+)(out) + L-aspartate(in) + 3 Na(+)(in) + H(+)(in). It catalyses the reaction D-aspartate(out) + K(+)(in) + 3 Na(+)(out) + H(+)(out) = D-aspartate(in) + K(+)(out) + 3 Na(+)(in) + H(+)(in). In terms of biological role, sodium-dependent, high-affinity amino acid transporter that mediates the uptake of L-glutamate and also L-aspartate and D-aspartate. Functions as a symporter that transports one amino acid molecule together with two or three Na(+) ions and one proton, in parallel with the counter-transport of one K(+) ion. Acts primarily as an inhibitory glutamate-gated chloride channel being a major inhibitory presynaptic receptor at mammalian rod bipolar cell axon terminals. Glutamate binding gates a large Cl(-) conductance that mediates inhibition, affecting visual processing in the retina. In Mus musculus (Mouse), this protein is Excitatory amino acid transporter 5.